Reading from the N-terminus, the 360-residue chain is CLIP domain-containing serine protease B4 (360 aa).

An N-terminal signal peptide occupies residues 1 to 24; the sequence is MIGNRVINLLIVATLALAGQTVLA. The 54-residue stretch at 30–83 folds into the Clip domain; it reads DCVNPVGEAGKCVLFRECQPLVDIYNKPVNTPDDTQFLTESRCGLYERKTLVCC. Cystine bridges form between C31-C82, C41-C72, C47-C83, and C138-C154. A Peptidase S1 domain is found at 108–360; that stretch reads VIGGQPTKID…YVDWIKDNIY (253 aa). Catalysis depends on charge relay system residues H153 and D213. Residue N224 is glycosylated (N-linked (GlcNAc...) asparagine). Cystine bridges form between C280–C297 and C307–C336. S311 acts as the Charge relay system in catalysis.

The protein belongs to the peptidase S1 family. CLIP subfamily. Interacts with SRPN2 in the hemolymph of immune-challenged female mosquitoes; the interaction results in CLIPB4 inhibition. As to expression, in females, expressed in fat body, cuticle, thorax and ovaries.

It localises to the secreted. Serine protease which plays a role in the innate immune response against protozoan and bacterial pathogens, such as Plasmodium bergei, Staphylococcus aureus, Micrococcus luteus and Escherichia coli, by activating the melanization cascade. Cleaves and activates CLIPB8. In the resistant strain L3-5, involved in the melanization of killed parasite P.berghei ookinetes which results in their clearance. In the susceptible strain G3, appears to be dispensable for ookinete elimination which occurs by lysis. The protein is CLIP domain-containing serine protease B4 of Anopheles gambiae (African malaria mosquito).